A 472-amino-acid chain; its full sequence is Uronate isomerase (472 aa).

The protein belongs to the metallo-dependent hydrolases superfamily. Uronate isomerase family.

The catalysed reaction is D-glucuronate = D-fructuronate. It carries out the reaction aldehydo-D-galacturonate = keto-D-tagaturonate. It participates in carbohydrate metabolism; pentose and glucuronate interconversion. The polypeptide is Uronate isomerase (Nostoc punctiforme (strain ATCC 29133 / PCC 73102)).